Consider the following 285-residue polypeptide: Polyamine aminopropyltransferase (285 aa).

The 237-residue stretch at 5-241 (DTWFTEHFQA…GWWSVTLSSK (237 aa)) folds into the PABS domain. Glutamine 35 is a binding site for S-methyl-5'-thioadenosine. Residues histidine 66 and aspartate 90 each contribute to the spermidine site. S-methyl-5'-thioadenosine-binding positions include aspartate 110 and 141–142 (DG). Catalysis depends on aspartate 160, which acts as the Proton acceptor. Position 160-163 (160-163 (DSTD)) interacts with spermidine. An S-methyl-5'-thioadenosine-binding site is contributed by proline 167.

This sequence belongs to the spermidine/spermine synthase family. Homodimer or homotetramer.

It localises to the cytoplasm. The enzyme catalyses S-adenosyl 3-(methylsulfanyl)propylamine + putrescine = S-methyl-5'-thioadenosine + spermidine + H(+). It functions in the pathway amine and polyamine biosynthesis; spermidine biosynthesis; spermidine from putrescine: step 1/1. Functionally, catalyzes the irreversible transfer of a propylamine group from the amino donor S-adenosylmethioninamine (decarboxy-AdoMet) to putrescine (1,4-diaminobutane) to yield spermidine. This Xylella fastidiosa (strain M12) protein is Polyamine aminopropyltransferase.